A 221-amino-acid polypeptide reads, in one-letter code: MPGKPVLHYFDGRGRMEPIRWLLAAAGVEFEEQFLKTRDDLARLRNDGSLMFQQVPMVEIDGMKLVQTRAILNYIATKYNLYGKDMKERALIDMYAEGVADLDEIVLHYPYIPPGEKEASLAKIKDKARNRYFPAFEKVLKSHGQDYLVGNRLSRADVYLVQVLYHVEELDPSALANFPLLKALRTRVSNLPTVKKFLQPGSQRKPLEDEKCVESAVKIFS.

The region spanning 3 to 83 (GKPVLHYFDG…YIATKYNLYG (81 aa)) is the GST N-terminal domain. At Lys4 the chain carries N6-succinyllysine. Glutathione is bound by residues Tyr9, Arg45, 54 to 55 (QV), and 67 to 68 (QT). Residues 85 to 207 (DMKERALIDM…LQPGSQRKPL (123 aa)) enclose the GST C-terminal domain.

Belongs to the GST superfamily. Alpha family. Heterodimer of YC1 and YC2.

Its subcellular location is the cytoplasm. It catalyses the reaction RX + glutathione = an S-substituted glutathione + a halide anion + H(+). The catalysed reaction is androst-5-ene-3,17-dione = androst-4-ene-3,17-dione. The enzyme catalyses pregn-5-ene-3,20-dione = progesterone. Functionally, conjugation of reduced glutathione to a wide number of exogenous and endogenous hydrophobic electrophiles. Catalyzes isomerization reactions that contribute to the biosynthesis of steroid hormones. Efficiently catalyze obligatory double-bond isomerizations of delta(5)-androstene-3,17-dione and delta(5)-pregnene-3,20-dione, precursors to testosterone and progesterone, respectively. Has substantial activity toward aflatoxin B1-8,9-epoxide. In Rattus norvegicus (Rat), this protein is Glutathione S-transferase alpha-3.